Here is a 336-residue protein sequence, read N- to C-terminus: Malate dehydrogenase, cytoplasmic (336 aa).

NAD(+) contacts are provided by residues 11 to 17 (GAAGQIG) and D42. Residues R92 and R98 each coordinate substrate. NAD(+) contacts are provided by residues N105, Q112, and 129 to 131 (VGN). Substrate-binding residues include N131 and R163. H188 serves as the catalytic Proton acceptor.

This sequence belongs to the LDH/MDH superfamily. MDH type 2 family. Homodimer.

It is found in the cytoplasm. It carries out the reaction (S)-malate + NAD(+) = oxaloacetate + NADH + H(+). In terms of biological role, catalyzes the reversible conversion of (S)-malate to oxaloacetate in the cytoplasm where oxaloacetate is used for gluconeogenesis. This chain is Malate dehydrogenase, cytoplasmic, found in Caenorhabditis elegans.